We begin with the raw amino-acid sequence, 601 residues long: Elongation factor 4 (601 aa).

The tr-type G domain maps to 7-189 (RNIRNFSIIA…AIVHRIPPPK (183 aa)). GTP-binding positions include 19–24 (DHGKST) and 136–139 (NKID).

Belongs to the TRAFAC class translation factor GTPase superfamily. Classic translation factor GTPase family. LepA subfamily.

It is found in the cell inner membrane. It carries out the reaction GTP + H2O = GDP + phosphate + H(+). Required for accurate and efficient protein synthesis under certain stress conditions. May act as a fidelity factor of the translation reaction, by catalyzing a one-codon backward translocation of tRNAs on improperly translocated ribosomes. Back-translocation proceeds from a post-translocation (POST) complex to a pre-translocation (PRE) complex, thus giving elongation factor G a second chance to translocate the tRNAs correctly. Binds to ribosomes in a GTP-dependent manner. The protein is Elongation factor 4 of Xanthomonas axonopodis pv. citri (strain 306).